Here is a 210-residue protein sequence, read N- to C-terminus: Pyridoxine/pyridoxamine 5'-phosphate oxidase (210 aa).

Substrate-binding positions include 7-10 (RQSY) and lysine 65. FMN is bound by residues 60–65 (RIVLIK), 75–76 (FT), arginine 81, lysine 82, and glutamine 104. Substrate is bound by residues tyrosine 122, arginine 126, and serine 130. FMN is bound by residues 139–140 (QS) and tryptophan 182. 188 to 190 (RLH) serves as a coordination point for substrate. An FMN-binding site is contributed by arginine 192.

This sequence belongs to the pyridoxamine 5'-phosphate oxidase family. Homodimer. FMN serves as cofactor.

It catalyses the reaction pyridoxamine 5'-phosphate + O2 + H2O = pyridoxal 5'-phosphate + H2O2 + NH4(+). The enzyme catalyses pyridoxine 5'-phosphate + O2 = pyridoxal 5'-phosphate + H2O2. The protein operates within cofactor metabolism; pyridoxal 5'-phosphate salvage; pyridoxal 5'-phosphate from pyridoxamine 5'-phosphate: step 1/1. Its pathway is cofactor metabolism; pyridoxal 5'-phosphate salvage; pyridoxal 5'-phosphate from pyridoxine 5'-phosphate: step 1/1. Functionally, catalyzes the oxidation of either pyridoxine 5'-phosphate (PNP) or pyridoxamine 5'-phosphate (PMP) into pyridoxal 5'-phosphate (PLP). The sequence is that of Pyridoxine/pyridoxamine 5'-phosphate oxidase from Bordetella bronchiseptica (strain ATCC BAA-588 / NCTC 13252 / RB50) (Alcaligenes bronchisepticus).